We begin with the raw amino-acid sequence, 623 residues long: UvrABC system protein C (623 aa).

The region spanning 21 to 100 (AEPGVYLMRD…IKTHQPPYNV (80 aa)) is the GIY-YIG domain. Residues 210-245 (DELIRELQEKMIQAAEQENYEAAARYRDQIRGLEQL) enclose the UVR domain.

The protein belongs to the UvrC family. In terms of assembly, interacts with UvrB in an incision complex.

It is found in the cytoplasm. Its function is as follows. The UvrABC repair system catalyzes the recognition and processing of DNA lesions. UvrC both incises the 5' and 3' sides of the lesion. The N-terminal half is responsible for the 3' incision and the C-terminal half is responsible for the 5' incision. The protein is UvrABC system protein C of Synechococcus sp. (strain JA-2-3B'a(2-13)) (Cyanobacteria bacterium Yellowstone B-Prime).